Reading from the N-terminus, the 1108-residue chain is Alpha-mannosidase 2 (1108 aa).

The Cytoplasmic segment spans residues 1 to 9; sequence MLRIRRRFA. A helical; Signal-anchor for type II membrane protein transmembrane segment spans residues 10–30; sequence LVICSGCLLVFLSLYIILNFA. Topologically, residues 31 to 1108 are lumenal; the sequence is APAATQIKPN…TAAYVSSHSS (1078 aa). The segment at 70-92 is disordered; the sequence is AETSNRDDPIRPPLKVARSPRPG. Residues H153, D155, D267, and H534 each contribute to the Zn(2+) site. D267 acts as the Nucleophile in catalysis.

This sequence belongs to the glycosyl hydrolase 38 family. As to quaternary structure, homodimer; disulfide-linked. Zn(2+) is required as a cofactor.

The protein localises to the golgi apparatus membrane. The catalysed reaction is N(4)-{beta-D-GlcNAc-(1-&gt;2)-alpha-D-Man-(1-&gt;3)-[alpha-D-Man-(1-&gt;3)-[alpha-D-Man-(1-&gt;6)]-alpha-D-Man-(1-&gt;6)]-beta-D-Man-(1-&gt;4)-beta-D-GlcNAc-(1-&gt;4)-beta-D-GlcNAc}-L-asparaginyl-[protein] + 2 H2O = 2 alpha-D-mannopyranose + an N(4)-{beta-D-GlcNAc-(1-&gt;2)-alpha-D-Man-(1-&gt;3)-[alpha-D-Man-(1-&gt;6)]-beta-D-Man-(1-&gt;4)-beta-D-GlcNAc-(1-&gt;4)-beta-D-GlcNAc}-L-asparaginyl-[protein]. The protein operates within protein modification; protein glycosylation. In terms of biological role, catalyzes the first committed step in the biosynthesis of complex N-glycans. It controls conversion of high mannose to complex N-glycans; the final hydrolytic step in the N-glycan maturation pathway. In Drosophila melanogaster (Fruit fly), this protein is Alpha-mannosidase 2.